A 529-amino-acid chain; its full sequence is Ribonuclease Y (529 aa).

The chain crosses the membrane as a helical span at residues G4 to Y24. The region spanning L216–V297 is the KH domain. Residues A342 to G435 form the HD domain.

The protein belongs to the RNase Y family.

The protein localises to the cell membrane. Endoribonuclease that initiates mRNA decay. The chain is Ribonuclease Y from Helicobacter pylori (strain J99 / ATCC 700824) (Campylobacter pylori J99).